Reading from the N-terminus, the 310-residue chain is Olfactory receptor 8B12 (310 aa).

The Extracellular portion of the chain corresponds to 1–24 (MAAKNSSVTEFILEGLTHQPGLRI). Asn-5 carries an N-linked (GlcNAc...) asparagine glycan. The chain crosses the membrane as a helical span at residues 25 to 45 (PLFFLFLGFYTVTVVGNLGLI). Residues 46-53 (TLIGLNSH) lie on the Cytoplasmic side of the membrane. A helical membrane pass occupies residues 54 to 74 (LHTPMYFFLFNLSLIDFCFST). The Extracellular segment spans residues 75-98 (TITPKMLMSFVSRKNIISFTGCMT). An intrachain disulfide couples Cys-96 to Cys-188. The helical transmembrane segment at 99–119 (QLFFFCFFVVSESFILSAMAY) threads the bilayer. Topologically, residues 120–138 (DRYVAICNPLLYTVTMSCQ) are cytoplasmic. Residues 139–159 (VCLLLLLGAYGMGFAGAMAHT) form a helical membrane-spanning segment. The Extracellular segment spans residues 160-196 (GSIMNLTFCADNLVNHFMCDILPLLELSCNSSYMNEL). N-linked (GlcNAc...) asparagine glycans are attached at residues Asn-164 and Asn-189. Residues 197 to 216 (VVFIVVAVDVGMPIVTVFIS) traverse the membrane as a helical segment. Residues 217 to 236 (YALILSSILHNSSTEGRSKA) lie on the Cytoplasmic side of the membrane. Residues 237-257 (FSTCSSHIIVVSLFFGSGAFM) form a helical membrane-spanning segment. At 258-270 (YLKPLSILPLEQG) the chain is on the extracellular side. A helical transmembrane segment spans residues 271 to 291 (KVSSLFYTIIVPVLNPLIYSL). The Cytoplasmic segment spans residues 292–310 (RNKDVKVALRRTLGRKIFS).

It belongs to the G-protein coupled receptor 1 family.

Its subcellular location is the cell membrane. In terms of biological role, odorant receptor. This chain is Olfactory receptor 8B12 (OR8B12), found in Homo sapiens (Human).